The sequence spans 335 residues: Auxin-responsive protein IAA6 (335 aa).

An EAR-like (transcriptional repression) motif is present at residues 51 to 55 (LKLGL). Disordered regions lie at residues 81 to 102 (LSFFPKHSKTTSSTTTTTGAKR), 143 to 180 (KKGCCPPPPPPHGAPATPARNRPQTQGRGAAAPVVGWP), and 188 to 207 (NLASSSSSKHSPEPQNDNAN). The PB1 domain maps to 217–321 (NPLVKINMDG…TAKRLRVLRS (105 aa)).

It belongs to the Aux/IAA family. As to quaternary structure, homodimers and heterodimers. Highly expressed in roots. Expressed in shoots and flowers.

Its subcellular location is the nucleus. Its function is as follows. Aux/IAA proteins are short-lived transcriptional factors that function as repressors of early auxin response genes at low auxin concentrations. The protein is Auxin-responsive protein IAA6 (IAA6) of Oryza sativa subsp. japonica (Rice).